The chain runs to 852 residues: MGCRGPWLHTCLLWAAVASLLLPPAVTQQLRGAGLGPSTWINNAGAPGPSGEAAAAGLGHHGHSHRSPGEENEDVSMENGHHFWSHRDHGETDDEVSREYGHQPQGHRYHSPEAGDESVSEEGVHREQARQAPGHGGHGEAGAEDLAEHGSHGHGHEEEDEDVISSERPRHVLRRAPRGHGGEEEGEEEEEEEEVSPEHRHRGHGKEDEEDEDDDSTESDRHQAHRHRGHREEEDEDDDDDEGDSTESDHHQAHRHRGHEEEEDEEDDDDEGDSTESDRHQAHRHRGHREEEDEDDDDEGDSTESDRHQAHRHRGHREEEDDDDDDDEGDSTESDRHQAHRHRGHREEEDEDDDDEGDSTESDRHQAHRHRGHREEEDEDDDDEGDSTESDRHQAHRHRGHREEEDEDDDDEGDSTESDHHQAHRHRGHREEEDEEDDDEGDSTESDRHQAHRHRGHGEEEDEDDDDEGEHHHVPHRGHRGHEEDDGGDDDDGDDSTENGHQAHRHQGHGKEEAEVTSDEHHHHVPDHGHQGHGDKEGEEEGVSTDHWHQVPRHAHHGPGGEEEGGEEELTVKAGHHVASHPPPGHRSREGHAEEHQTEVPGHHQHRMGDTDTSAERGHPASSPRQQGHPPEDTVHHHRGSLKEEVGPESPGPAGVKDGSRVKRGGSEEEEEQKGTHHHSLEDEEDEEEGHGRSLSQEDQEEEDRRGESAKVQAPLRHHREEEEEEEEEEEEEGRLPFTIIPNPLSGREAAGGASSEESAEDTGPEDTQEYGNYQQGSLCGYCTFCNRCTECEHCHCDEDSMGEHCDQCQHCQFCYLCPLVCETVCTPGSYVDYFSSSLYKALADMLETPEP.

Residues Met-1–Thr-27 form the signal peptide. Gln-28 is modified (pyrrolidone carboxylic acid). The span at Ala-44–Leu-58 shows a compositional bias: low complexity. Residues Ala-44–Glu-770 are disordered. 2 consecutive repeat copies span residues Gly-59 to Asn-79 and Gly-80 to Tyr-100. Residues Gly-59–Tyr-100 form a 2 X approximate tandem repeats region. Over residues Asn-79 to Gly-101 the composition is skewed to basic and acidic residues. Residue Ser-120 is modified to Phosphoserine. A compositionally biased stretch (basic and acidic residues) spans Leu-146 to Glu-157. Acidic residues-rich tracts occupy residues Glu-184–Val-195, Asp-208–Thr-217, Glu-233–Thr-246, Glu-261–Thr-275, Glu-291–Thr-303, Glu-319–Thr-332, Glu-348–Thr-360, Glu-376–Thr-388, Glu-404–Thr-416, Glu-432–Thr-444, Glu-459–Glu-468, and Glu-484–Thr-497. 10 tandem repeats follow at residues His-199–Ala-224, His-225–Ala-253, His-254–Ala-282, His-283–Ala-310, His-311–Ala-339, His-340–Ala-367, His-368–Ala-395, His-396–Ala-423, His-424–Ala-451, and His-452–Glu-470. Residues His-199 to Glu-470 form a 10 X tandem repeats, acidic region. The tract at residues His-471–Gly-585 is 4 X approximate tandem repeats. Residues His-509 to Lys-536 show a composition bias toward basic and acidic residues. Phosphoserine occurs at positions 518, 544, and 614. Basic and acidic residues-rich tracts occupy residues Arg-587–His-619, Pro-630–Val-646, and Asp-658–Leu-681. Residues Glu-722 to Glu-733 are compositionally biased toward acidic residues. Low complexity predominate over residues Ser-746–Glu-757. Residues Glu-758–Gln-769 are compositionally biased toward acidic residues. Residues Cys-780–Cys-826 form a metal-binding region.

The protein belongs to the HRC family. The N-terminus is blocked.

The protein localises to the sarcoplasmic reticulum lumen. In terms of biological role, may play a role in the regulation of calcium sequestration or release in the SR of skeletal and cardiac muscle. The polypeptide is Sarcoplasmic reticulum histidine-rich calcium-binding protein (HRC) (Oryctolagus cuniculus (Rabbit)).